The chain runs to 282 residues: Putative hydrolase BceJ2315_61450 (282 aa).

The Mg(2+) site is built by E124, E126, and D155.

It belongs to the FAH family. Requires Mg(2+) as cofactor.

The sequence is that of Putative hydrolase BceJ2315_61450 from Burkholderia cenocepacia (strain ATCC BAA-245 / DSM 16553 / LMG 16656 / NCTC 13227 / J2315 / CF5610) (Burkholderia cepacia (strain J2315)).